The primary structure comprises 66 residues: Large ribosomal subunit protein bL35 (66 aa).

Basic residues-rich tracts occupy residues 1–15 (MPKLKTKSGAKKRFK) and 24–40 (HAQRGKRHGMIKRTKKQ). Residues 1–40 (MPKLKTKSGAKKRFKVTGTGKVMHAQRGKRHGMIKRTKKQ) are disordered.

This sequence belongs to the bacterial ribosomal protein bL35 family.

This Bradyrhizobium sp. (strain ORS 278) protein is Large ribosomal subunit protein bL35.